The primary structure comprises 509 residues: Thymus-specific serine protease (509 aa).

The N-terminal stretch at 1–22 (MAVKAPWLGFLLLVSLWGLSTP) is a signal peptide. Asn-69 and Asn-171 each carry an N-linked (GlcNAc...) asparagine glycan. Ser-184 serves as the catalytic Charge relay system. N-linked (GlcNAc...) asparagine glycosylation is present at Asn-320. Catalysis depends on charge relay system residues Asp-446 and His-471.

Belongs to the peptidase S28 family. Expressed predominantly in cortical thymic epithelial cells, with highest expression around vessels and the thymic capsule.

The protein resides in the cytoplasmic vesicle. Protease that may play a role in T-cell development. This is Thymus-specific serine protease (Prss16) from Mus musculus (Mouse).